An 87-amino-acid chain; its full sequence is Small ribosomal subunit protein uS19 (87 aa).

Positions 1–29 (MARSLKKGPFVDHHLQKKVDVQNKEGTKK) are disordered. The segment covering 9–28 (PFVDHHLQKKVDVQNKEGTK) has biased composition (basic and acidic residues).

The protein belongs to the universal ribosomal protein uS19 family.

In terms of biological role, protein S19 forms a complex with S13 that binds strongly to the 16S ribosomal RNA. This Protochlamydia amoebophila (strain UWE25) protein is Small ribosomal subunit protein uS19.